We begin with the raw amino-acid sequence, 200 residues long: Cysteine dioxygenase type 1 (200 aa).

Residues His86, His88, and His140 each coordinate Fe cation. Residues 93–157 (CFLKMLQGNL…TEPAVSLHLY (65 aa)) constitute a cross-link (3'-(S-cysteinyl)-tyrosine (Cys-Tyr)).

It belongs to the cysteine dioxygenase family. Monomer. The cofactor is Fe cation. Ni(2+) serves as cofactor. Zn(2+) is required as a cofactor. Post-translationally, the thioether cross-link between Cys-93 and Tyr-157 plays a structural role through stabilizing the Fe(2+) ion, and prevents the production of highly damaging free hydroxyl radicals by holding the oxygen radical via hydroxyl hydrogen.

The catalysed reaction is L-cysteine + O2 = 3-sulfino-L-alanine + H(+). Its pathway is organosulfur biosynthesis; taurine biosynthesis; hypotaurine from L-cysteine: step 1/2. Functionally, catalyzes the oxidation of cysteine to cysteine sulfinic acid with addition of molecular dioxygen. In Bos taurus (Bovine), this protein is Cysteine dioxygenase type 1 (CDO1).